The following is a 235-amino-acid chain: MRPALARRLLSGLGKLLLAALLSTIVSVALLRFIDPPMWTWRLERALFPPAKVAEVKHDWVPLEQISRELQLAVIAAEDQRFAEHNGFDMDAISSALKHNQHSERVRGASTLSQQTAKNLFMWSDRSFLRKGIEAWFTLLMELGWDKSRILEMYLNIVEFGPGIYGAEAAARHYFGKPAARLTRYEASLLAAALPNPWRYRVKPPSPYVQQRSAWIRRQMGQLGQITLNKVHQAD.

A helical transmembrane segment spans residues 12 to 34; the sequence is GLGKLLLAALLSTIVSVALLRFI.

The protein belongs to the glycosyltransferase 51 family.

It is found in the cell inner membrane. It carries out the reaction [GlcNAc-(1-&gt;4)-Mur2Ac(oyl-L-Ala-gamma-D-Glu-L-Lys-D-Ala-D-Ala)](n)-di-trans,octa-cis-undecaprenyl diphosphate + beta-D-GlcNAc-(1-&gt;4)-Mur2Ac(oyl-L-Ala-gamma-D-Glu-L-Lys-D-Ala-D-Ala)-di-trans,octa-cis-undecaprenyl diphosphate = [GlcNAc-(1-&gt;4)-Mur2Ac(oyl-L-Ala-gamma-D-Glu-L-Lys-D-Ala-D-Ala)](n+1)-di-trans,octa-cis-undecaprenyl diphosphate + di-trans,octa-cis-undecaprenyl diphosphate + H(+). Its pathway is cell wall biogenesis; peptidoglycan biosynthesis. Functionally, peptidoglycan polymerase that catalyzes glycan chain elongation from lipid-linked precursors. This chain is Biosynthetic peptidoglycan transglycosylase, found in Aeromonas hydrophila subsp. hydrophila (strain ATCC 7966 / DSM 30187 / BCRC 13018 / CCUG 14551 / JCM 1027 / KCTC 2358 / NCIMB 9240 / NCTC 8049).